Here is a 297-residue protein sequence, read N- to C-terminus: Phosphatidylserine decarboxylase proenzyme (297 aa).

Catalysis depends on charge relay system; for autoendoproteolytic cleavage activity residues Asp100, His157, and Ser263. Ser263 serves as the catalytic Schiff-base intermediate with substrate; via pyruvic acid; for decarboxylase activity. The residue at position 263 (Ser263) is a Pyruvic acid (Ser); by autocatalysis.

The protein belongs to the phosphatidylserine decarboxylase family. PSD-B subfamily. Prokaryotic type I sub-subfamily. As to quaternary structure, heterodimer of a large membrane-associated beta subunit and a small pyruvoyl-containing alpha subunit. Requires pyruvate as cofactor. Post-translationally, is synthesized initially as an inactive proenzyme. Formation of the active enzyme involves a self-maturation process in which the active site pyruvoyl group is generated from an internal serine residue via an autocatalytic post-translational modification. Two non-identical subunits are generated from the proenzyme in this reaction, and the pyruvate is formed at the N-terminus of the alpha chain, which is derived from the carboxyl end of the proenzyme. The autoendoproteolytic cleavage occurs by a canonical serine protease mechanism, in which the side chain hydroxyl group of the serine supplies its oxygen atom to form the C-terminus of the beta chain, while the remainder of the serine residue undergoes an oxidative deamination to produce ammonia and the pyruvoyl prosthetic group on the alpha chain. During this reaction, the Ser that is part of the protease active site of the proenzyme becomes the pyruvoyl prosthetic group, which constitutes an essential element of the active site of the mature decarboxylase.

The protein localises to the cell membrane. The catalysed reaction is a 1,2-diacyl-sn-glycero-3-phospho-L-serine + H(+) = a 1,2-diacyl-sn-glycero-3-phosphoethanolamine + CO2. The protein operates within phospholipid metabolism; phosphatidylethanolamine biosynthesis; phosphatidylethanolamine from CDP-diacylglycerol: step 2/2. Functionally, catalyzes the formation of phosphatidylethanolamine (PtdEtn) from phosphatidylserine (PtdSer). This Glaesserella parasuis serovar 5 (strain SH0165) (Haemophilus parasuis) protein is Phosphatidylserine decarboxylase proenzyme.